A 179-amino-acid polypeptide reads, in one-letter code: UPF0227 protein VIBHAR_01524 (179 aa).

This sequence belongs to the UPF0227 family.

The sequence is that of UPF0227 protein VIBHAR_01524 from Vibrio campbellii (strain ATCC BAA-1116).